The primary structure comprises 155 residues: Protein E6 (155 aa).

Zinc fingers lie at residues 33–69 (CVYC…CRVC) and 106–142 (CYRC…CLGC).

The protein belongs to the papillomaviridae E6 protein family. As to quaternary structure, forms homodimers. Interacts with ubiquitin-protein ligase UBE3A/E6-AP; this interaction stimulates UBE3A ubiquitin activity. Interacts with host TP53 and EP300; this interaction inhibits TP53 activity.

Its subcellular location is the host cytoplasm. It localises to the host nucleus. In terms of biological role, this protein has transforming activity in vitro. Plays a major role in the induction and maintenance of cellular transformation. E6 associates with host UBE3A/E6-AP ubiquitin-protein ligase and modulates its activity. Sequesters tumor suppressor TP53 in the host cytoplasm and modulates its activity by interacting with host EP300 that results in the reduction of TP53 acetylation and activation. In turn, apoptosis induced by DNA damage is inhibited. E6 also protects host keratinocytes from apoptosis by mediating the degradation of host BAK1. May also inhibit host immune response. In Human papillomavirus 56, this protein is Protein E6.